The chain runs to 31 residues: Cytochrome b6-f complex subunit 6 (31 aa).

Residues 4 to 26 (ITSYFGFLLAASTITPALLIGLS) form a helical membrane-spanning segment.

It belongs to the PetL family. The 4 large subunits of the cytochrome b6-f complex are cytochrome b6, subunit IV (17 kDa polypeptide, PetD), cytochrome f and the Rieske protein, while the 4 small subunits are PetG, PetL, PetM and PetN. The complex functions as a dimer.

It localises to the plastid. The protein resides in the chloroplast thylakoid membrane. Functionally, component of the cytochrome b6-f complex, which mediates electron transfer between photosystem II (PSII) and photosystem I (PSI), cyclic electron flow around PSI, and state transitions. PetL is important for photoautotrophic growth as well as for electron transfer efficiency and stability of the cytochrome b6-f complex. In Illicium oligandrum (Star anise), this protein is Cytochrome b6-f complex subunit 6.